Reading from the N-terminus, the 466-residue chain is Cysteine--tRNA ligase (466 aa).

Cysteine 27 is a binding site for Zn(2+). The 'HIGH' region signature appears at 29 to 39; that stretch reads PTVYNFFHIGN. 3 residues coordinate Zn(2+): cysteine 207, histidine 232, and glutamate 236. Positions 264–268 match the 'KMSKS' region motif; that stretch reads KMSKS. Residue lysine 267 coordinates ATP.

This sequence belongs to the class-I aminoacyl-tRNA synthetase family. As to quaternary structure, monomer. Zn(2+) serves as cofactor.

The protein localises to the cytoplasm. It carries out the reaction tRNA(Cys) + L-cysteine + ATP = L-cysteinyl-tRNA(Cys) + AMP + diphosphate. The chain is Cysteine--tRNA ligase from Clostridium beijerinckii (strain ATCC 51743 / NCIMB 8052) (Clostridium acetobutylicum).